We begin with the raw amino-acid sequence, 152 residues long: Superoxide dismutase [Cu-Zn] (152 aa).

His45, His47, and His62 together coordinate Cu cation. An intrachain disulfide couples Cys56 to Cys145. Zn(2+)-binding residues include His62, His70, His79, and Asp82. His119 contacts Cu cation.

Belongs to the Cu-Zn superoxide dismutase family. As to quaternary structure, homodimer. Cu cation is required as a cofactor. It depends on Zn(2+) as a cofactor.

The protein localises to the cytoplasm. It catalyses the reaction 2 superoxide + 2 H(+) = H2O2 + O2. Its function is as follows. Destroys radicals which are normally produced within the cells and which are toxic to biological systems. The chain is Superoxide dismutase [Cu-Zn] (SODCC) from Capsicum annuum (Capsicum pepper).